Here is a 445-residue protein sequence, read N- to C-terminus: E3 ubiquitin-protein ligase MYLIP (445 aa).

In terms of domain architecture, FERM spans Met1–Thr279. Residues Cys360, Cys363, and Cys368 each contribute to the Fe cation site. Residues Cys387–Arg422 form an RING-type zinc finger. The interval Val431–Leu433 is critical for homodimerization.

As to quaternary structure, homodimer. Interacts with the E2 ubiquitin-conjugating enzyme, UBE2D1 (via RING-type zinc finger). Interacts with myosin regulatory light chain (MRLC) and TMEM4. In terms of processing, autoubiquitinated. In terms of tissue distribution, ubiquitously expressed.

The protein localises to the cytoplasm. The protein resides in the cell membrane. It carries out the reaction S-ubiquitinyl-[E2 ubiquitin-conjugating enzyme]-L-cysteine + [acceptor protein]-L-lysine = [E2 ubiquitin-conjugating enzyme]-L-cysteine + N(6)-ubiquitinyl-[acceptor protein]-L-lysine.. It functions in the pathway protein modification; protein ubiquitination. With respect to regulation, can bind 1 iron ion per dimer. Iron binding seems to decrease LDLR degradation activity. Its function is as follows. E3 ubiquitin-protein ligase that mediates ubiquitination and subsequent proteasomal degradation of myosin regulatory light chain (MRLC), LDLR, VLDLR and LRP8. Activity depends on E2 enzymes of the UBE2D family. Proteasomal degradation of MRLC leads to inhibit neurite outgrowth in presence of NGF by counteracting the stabilization of MRLC by saposin-like protein (CNPY2/MSAP) and reducing CNPY2-stimulated neurite outgrowth. Acts as a sterol-dependent inhibitor of cellular cholesterol uptake by mediating ubiquitination and subsequent degradation of LDLR. The sequence is that of E3 ubiquitin-protein ligase MYLIP (MYLIP) from Homo sapiens (Human).